The primary structure comprises 334 residues: D-fructose 1,6-bisphosphatase class 2/sedoheptulose 1,7-bisphosphatase (334 aa).

Asp-33, Glu-57, Asp-85, and Glu-88 together coordinate Mn(2+). Substrate-binding positions include 88–90, Tyr-119, 164–166, and 186–188; these read EGT, RAR, and DGD. A Mn(2+)-binding site is contributed by Glu-213.

Belongs to the FBPase class 2 family. In terms of assembly, homotetramer. Requires Mn(2+) as cofactor.

It catalyses the reaction beta-D-fructose 1,6-bisphosphate + H2O = beta-D-fructose 6-phosphate + phosphate. The catalysed reaction is D-sedoheptulose 1,7-bisphosphate + H2O = D-sedoheptulose 7-phosphate + phosphate. It participates in carbohydrate biosynthesis; Calvin cycle. In terms of biological role, catalyzes the hydrolysis of fructose 1,6-bisphosphate (Fru 1,6-P2) and sedoheptulose 1,7-bisphosphate (Sed 1,7-P2) to fructose 6-phosphate and sedoheptulose 7-phosphate, respectively. In Synechococcus sp. (strain RCC307), this protein is D-fructose 1,6-bisphosphatase class 2/sedoheptulose 1,7-bisphosphatase.